The following is a 298-amino-acid chain: ATP phosphoribosyltransferase (298 aa).

Belongs to the ATP phosphoribosyltransferase family. Long subfamily. Requires Mg(2+) as cofactor.

It is found in the cytoplasm. The catalysed reaction is 1-(5-phospho-beta-D-ribosyl)-ATP + diphosphate = 5-phospho-alpha-D-ribose 1-diphosphate + ATP. It functions in the pathway amino-acid biosynthesis; L-histidine biosynthesis; L-histidine from 5-phospho-alpha-D-ribose 1-diphosphate: step 1/9. With respect to regulation, feedback inhibited by histidine. In terms of biological role, catalyzes the condensation of ATP and 5-phosphoribose 1-diphosphate to form N'-(5'-phosphoribosyl)-ATP (PR-ATP). Has a crucial role in the pathway because the rate of histidine biosynthesis seems to be controlled primarily by regulation of HisG enzymatic activity. The protein is ATP phosphoribosyltransferase of Vibrio vulnificus (strain CMCP6).